The chain runs to 266 residues: Small ribosomal subunit protein eS1 (266 aa).

The segment at 233–266 (GEGGGSSAAKPSGDDTGAKVDRADGYEPPIQETV) is disordered. Positions 244–257 (SGDDTGAKVDRADG) are enriched in basic and acidic residues.

It belongs to the eukaryotic ribosomal protein eS1 family. Component of the small ribosomal subunit. Mature ribosomes consist of a small (40S) and a large (60S) subunit. The 40S subunit contains about 33 different proteins and 1 molecule of RNA (18S). The 60S subunit contains about 49 different proteins and 3 molecules of RNA (28S, 5.8S and 5S). Part of the small subunit (SSU) processome, composed of more than 70 proteins and the RNA chaperone small nucleolar RNA (snoRNA) U3.

Its subcellular location is the cytoplasm. It localises to the nucleus. It is found in the nucleolus. Its function is as follows. Component of the small ribosomal subunit. The ribosome is a large ribonucleoprotein complex responsible for the synthesis of proteins in the cell. Part of the small subunit (SSU) processome, first precursor of the small eukaryotic ribosomal subunit. During the assembly of the SSU processome in the nucleolus, many ribosome biogenesis factors, an RNA chaperone and ribosomal proteins associate with the nascent pre-rRNA and work in concert to generate RNA folding, modifications, rearrangements and cleavage as well as targeted degradation of pre-ribosomal RNA by the RNA exosome. May play a role during erythropoiesis. The polypeptide is Small ribosomal subunit protein eS1 (rps3a) (Salmo salar (Atlantic salmon)).